A 387-amino-acid chain; its full sequence is Erythronate-4-phosphate dehydrogenase (387 aa).

2 residues coordinate substrate: Ser45 and Thr67. Asp147 is a binding site for NAD(+). The active site involves Arg208. An NAD(+)-binding site is contributed by Asp232. Glu237 is an active-site residue. Residue His254 is the Proton donor of the active site. Gly257 is a binding site for NAD(+). Residue Tyr258 coordinates substrate.

The protein belongs to the D-isomer specific 2-hydroxyacid dehydrogenase family. PdxB subfamily. Homodimer.

The protein localises to the cytoplasm. It catalyses the reaction 4-phospho-D-erythronate + NAD(+) = (R)-3-hydroxy-2-oxo-4-phosphooxybutanoate + NADH + H(+). The protein operates within cofactor biosynthesis; pyridoxine 5'-phosphate biosynthesis; pyridoxine 5'-phosphate from D-erythrose 4-phosphate: step 2/5. Catalyzes the oxidation of erythronate-4-phosphate to 3-hydroxy-2-oxo-4-phosphonooxybutanoate. In Shewanella woodyi (strain ATCC 51908 / MS32), this protein is Erythronate-4-phosphate dehydrogenase.